A 421-amino-acid polypeptide reads, in one-letter code: Putative hydro-lyase KRH_21160 (421 aa).

2 disordered regions span residues 200–298 (TWGH…SPVT) and 312–421 (TRAG…AVSR). Residues 224–237 (GSRRRPRWWSRLRR) show a composition bias toward basic residues. Low complexity-rich tracts occupy residues 243–260 (PRATCSSPTPGTPTTRCP) and 370–380 (SRGPGPCPRAA).

The protein belongs to the D-glutamate cyclase family.

This Kocuria rhizophila (strain ATCC 9341 / DSM 348 / NBRC 103217 / DC2201) protein is Putative hydro-lyase KRH_21160.